We begin with the raw amino-acid sequence, 716 residues long: 1,4-alpha-glucan branching enzyme GlgB (716 aa).

Asp-398 serves as the catalytic Nucleophile. The Proton donor role is filled by Glu-451.

Belongs to the glycosyl hydrolase 13 family. GlgB subfamily. In terms of assembly, monomer.

The enzyme catalyses Transfers a segment of a (1-&gt;4)-alpha-D-glucan chain to a primary hydroxy group in a similar glucan chain.. It participates in glycan biosynthesis; glycogen biosynthesis. Catalyzes the formation of the alpha-1,6-glucosidic linkages in glycogen by scission of a 1,4-alpha-linked oligosaccharide from growing alpha-1,4-glucan chains and the subsequent attachment of the oligosaccharide to the alpha-1,6 position. This is 1,4-alpha-glucan branching enzyme GlgB from Nitrobacter hamburgensis (strain DSM 10229 / NCIMB 13809 / X14).